A 1423-amino-acid polypeptide reads, in one-letter code: DNA-directed RNA polymerase subunit beta' (1423 aa).

C70, C72, C85, and C88 together coordinate Zn(2+). Mg(2+)-binding residues include D461, D463, and D465. Zn(2+)-binding residues include C809, C883, C890, and C893. Positions 1383-1423 (EEHAAELRQPVQADTGDDPLGAVVGESHGTDADAGDYLTEE) are disordered.

The protein belongs to the RNA polymerase beta' chain family. In terms of assembly, the RNAP catalytic core consists of 2 alpha, 1 beta, 1 beta' and 1 omega subunit. When a sigma factor is associated with the core the holoenzyme is formed, which can initiate transcription. The cofactor is Mg(2+). Zn(2+) serves as cofactor.

It catalyses the reaction RNA(n) + a ribonucleoside 5'-triphosphate = RNA(n+1) + diphosphate. In terms of biological role, DNA-dependent RNA polymerase catalyzes the transcription of DNA into RNA using the four ribonucleoside triphosphates as substrates. This Rhizorhabdus wittichii (strain DSM 6014 / CCUG 31198 / JCM 15750 / NBRC 105917 / EY 4224 / RW1) (Sphingomonas wittichii) protein is DNA-directed RNA polymerase subunit beta'.